The primary structure comprises 208 residues: Pyrrolidone-carboxylate peptidase (208 aa).

Catalysis depends on residues E79, C142, and H166.

Belongs to the peptidase C15 family. As to quaternary structure, homotetramer made of two disulfide-linked dimers.

The protein localises to the cytoplasm. It catalyses the reaction Release of an N-terminal pyroglutamyl group from a polypeptide, the second amino acid generally not being Pro.. In terms of biological role, removes 5-oxoproline from various penultimate amino acid residues except L-proline. This is Pyrrolidone-carboxylate peptidase (pcp) from Pyrococcus furiosus (strain ATCC 43587 / DSM 3638 / JCM 8422 / Vc1).